Reading from the N-terminus, the 494-residue chain is 3-octaprenyl-4-hydroxybenzoate carboxy-lyase (494 aa).

Residue asparagine 172 participates in Mn(2+) binding. Residues isoleucine 175–arginine 177, arginine 189–leucine 191, and arginine 194–glycine 195 contribute to the prenylated FMN site. Residue glutamate 238 coordinates Mn(2+). Aspartate 287 serves as the catalytic Proton donor.

This sequence belongs to the UbiD family. In terms of assembly, homohexamer. Prenylated FMN is required as a cofactor. Requires Mn(2+) as cofactor.

It localises to the cell membrane. It carries out the reaction a 4-hydroxy-3-(all-trans-polyprenyl)benzoate + H(+) = a 2-(all-trans-polyprenyl)phenol + CO2. Its pathway is cofactor biosynthesis; ubiquinone biosynthesis. Its function is as follows. Catalyzes the decarboxylation of 3-octaprenyl-4-hydroxy benzoate to 2-octaprenylphenol, an intermediate step in ubiquinone biosynthesis. The chain is 3-octaprenyl-4-hydroxybenzoate carboxy-lyase from Escherichia coli O9:H4 (strain HS).